A 430-amino-acid polypeptide reads, in one-letter code: Lipoyl synthase, mitochondrial (430 aa).

A mitochondrion-targeting transit peptide spans 1-37; the sequence is MATSAGKLRTLYSAHSSLSSLPPSARPTLQLATLRSY. A compositionally biased stretch (polar residues) spans 39–55; the sequence is TTTPHDSPIGNTSNTPP. The tract at residues 39-59 is disordered; the sequence is TTTPHDSPIGNTSNTPPTVKR. Residues C141, C146, C152, C172, C176, C179, and S387 each coordinate [4Fe-4S] cluster. The Radical SAM core domain occupies 155 to 376; the sequence is GSSKSAATAT…KERALEMGFL (222 aa).

The protein belongs to the radical SAM superfamily. Lipoyl synthase family. [4Fe-4S] cluster is required as a cofactor.

Its subcellular location is the mitochondrion. The enzyme catalyses [[Fe-S] cluster scaffold protein carrying a second [4Fe-4S](2+) cluster] + N(6)-octanoyl-L-lysyl-[protein] + 2 oxidized [2Fe-2S]-[ferredoxin] + 2 S-adenosyl-L-methionine + 4 H(+) = [[Fe-S] cluster scaffold protein] + N(6)-[(R)-dihydrolipoyl]-L-lysyl-[protein] + 4 Fe(3+) + 2 hydrogen sulfide + 2 5'-deoxyadenosine + 2 L-methionine + 2 reduced [2Fe-2S]-[ferredoxin]. It functions in the pathway protein modification; protein lipoylation via endogenous pathway; protein N(6)-(lipoyl)lysine from octanoyl-[acyl-carrier-protein]: step 2/2. Functionally, catalyzes the radical-mediated insertion of two sulfur atoms into the C-6 and C-8 positions of the octanoyl moiety bound to the lipoyl domains of lipoate-dependent enzymes, thereby converting the octanoylated domains into lipoylated derivatives. The polypeptide is Lipoyl synthase, mitochondrial (Ajellomyces capsulatus (strain H143) (Darling's disease fungus)).